We begin with the raw amino-acid sequence, 620 residues long: 1-deoxy-D-xylulose-5-phosphate synthase (620 aa).

Thiamine diphosphate contacts are provided by residues histidine 80 and 121–123 (GHS). Aspartate 152 is a Mg(2+) binding site. Thiamine diphosphate contacts are provided by residues 153-154 (GA), asparagine 181, tyrosine 288, and glutamate 370. Asparagine 181 serves as a coordination point for Mg(2+).

Belongs to the transketolase family. DXPS subfamily. In terms of assembly, homodimer. It depends on Mg(2+) as a cofactor. Requires thiamine diphosphate as cofactor.

It catalyses the reaction D-glyceraldehyde 3-phosphate + pyruvate + H(+) = 1-deoxy-D-xylulose 5-phosphate + CO2. The protein operates within metabolic intermediate biosynthesis; 1-deoxy-D-xylulose 5-phosphate biosynthesis; 1-deoxy-D-xylulose 5-phosphate from D-glyceraldehyde 3-phosphate and pyruvate: step 1/1. In terms of biological role, catalyzes the acyloin condensation reaction between C atoms 2 and 3 of pyruvate and glyceraldehyde 3-phosphate to yield 1-deoxy-D-xylulose-5-phosphate (DXP). This Salmonella choleraesuis (strain SC-B67) protein is 1-deoxy-D-xylulose-5-phosphate synthase.